We begin with the raw amino-acid sequence, 272 residues long: Shikimate dehydrogenase (NADP(+)) (272 aa).

Shikimate-binding positions include 14 to 16 and Thr61; that span reads SKS. The active-site Proton acceptor is the Lys65. Glu77 is a binding site for NADP(+). Residues Asn86 and Asp102 each coordinate shikimate. NADP(+)-binding positions include 126–130, 149–154, and Met213; these read GAGGA and NRTASR. Position 215 (Tyr215) interacts with shikimate. Gly237 lines the NADP(+) pocket.

The protein belongs to the shikimate dehydrogenase family. In terms of assembly, homodimer.

The catalysed reaction is shikimate + NADP(+) = 3-dehydroshikimate + NADPH + H(+). Its pathway is metabolic intermediate biosynthesis; chorismate biosynthesis; chorismate from D-erythrose 4-phosphate and phosphoenolpyruvate: step 4/7. In terms of biological role, involved in the biosynthesis of the chorismate, which leads to the biosynthesis of aromatic amino acids. Catalyzes the reversible NADPH linked reduction of 3-dehydroshikimate (DHSA) to yield shikimate (SA). This is Shikimate dehydrogenase (NADP(+)) from Salmonella schwarzengrund (strain CVM19633).